We begin with the raw amino-acid sequence, 300 residues long: Tubulin polyglutamylase complex subunit 2 (300 aa).

A disordered region spans residues 257 to 300; that stretch reads KIVIPKKKGPVQPAGGQKGPSGPSGPSTSSTSKSSSGSGNPTRK. Low complexity predominate over residues 276–300; the sequence is PSGPSGPSTSSTSKSSSGSGNPTRK.

As to quaternary structure, part of the neuronal tubulin polyglutamylase complex which contains TPGS1, TPGS2, TTLL1, LRRC49 and NICN1. Interacts with CSTPP1 and LRRC49.

It is found in the cytoplasm. The protein resides in the cytoskeleton. It localises to the microtubule organizing center. Its subcellular location is the centrosome. The protein localises to the centriolar satellite. Subunit of the tubulin polyglutamylase complex (TPGC). The complex mediates cilia and flagella polyglutamylation which is essential for their biogenesis and motility. The sequence is that of Tubulin polyglutamylase complex subunit 2 (TPGS2) from Homo sapiens (Human).